We begin with the raw amino-acid sequence, 244 residues long: CTD nuclear envelope phosphatase 1 (244 aa).

Residues 7–29 traverse the membrane as a helical segment; the sequence is LLGLRTFVAFAAKLWSFFIYLLR. An FCP1 homology domain is found at 57 to 224; it reads AQVKRKILVL…LNLLPMLDAL (168 aa).

This sequence belongs to the dullard family. (Microbial infection) Interacts with Chandipura virus matrix protein. In terms of assembly, interacts with CNEP1R1; the complex dephosphorylates LPIN1 and LPIN2. Muscle specific with lower expression in other metabolic tissues.

The protein localises to the endoplasmic reticulum membrane. It localises to the nucleus membrane. It carries out the reaction O-phospho-L-seryl-[protein] + H2O = L-seryl-[protein] + phosphate. It catalyses the reaction O-phospho-L-threonyl-[protein] + H2O = L-threonyl-[protein] + phosphate. In terms of biological role, serine/threonine protein phosphatase forming with CNEP1R1 an active phosphatase complex that dephosphorylates and may activate LPIN1 and LPIN2. LPIN1 and LPIN2 are phosphatidate phosphatases that catalyze the conversion of phosphatidic acid to diacylglycerol and control the metabolism of fatty acids at different levels. May indirectly modulate the lipid composition of nuclear and/or endoplasmic reticulum membranes and be required for proper nuclear membrane morphology and/or dynamics. May also indirectly regulate the production of lipid droplets and triacylglycerol. May antagonize BMP signaling. The polypeptide is CTD nuclear envelope phosphatase 1 (CTDNEP1) (Homo sapiens (Human)).